The primary structure comprises 514 residues: Probable E3 ubiquitin-protein ligase ARI10 (514 aa).

Residues 1–18 are compositionally biased toward acidic residues; the sequence is MDYSDDDMIDNESGEENN. The tract at residues 1 to 26 is disordered; it reads MDYSDDDMIDNESGEENNSDGGGNES. The segment at 117–322 is TRIAD supradomain; the sequence is VDIQCGICFE…SDHYACNNYV (206 aa). Residues Cys121, Cys124, Cys138, His140, Cys143, Cys146, Cys166, Cys171, Cys210, Cys215, Cys231, Cys233, Cys238, Cys241, His246, Cys251, Cys278, and Cys281 each coordinate Zn(2+). An RING-type 1 zinc finger spans residues 121-171; it reads CGICFESYTRKEIASVSCGHPYCKTCWTGYITTKIEDGPGCLRVKCPEPSC. The IBR-type zinc finger occupies 190–251; the sequence is DKYYRYFLRS…SEDAHSPVDC (62 aa). The RING-type 2; atypical zinc finger occupies 278–308; sequence CPKCKRPIEKSHGCNHMTCSASCGHRFCWIC. Cys291 is a catalytic residue. Zn(2+)-binding residues include Cys296, Cys300, Cys305, Cys308, His315, and Cys318.

The protein belongs to the RBR family. Ariadne subfamily. The cofactor is Zn(2+).

The catalysed reaction is [E2 ubiquitin-conjugating enzyme]-S-ubiquitinyl-L-cysteine + [acceptor protein]-L-lysine = [E2 ubiquitin-conjugating enzyme]-L-cysteine + [acceptor protein]-N(6)-ubiquitinyl-L-lysine.. The protein operates within protein modification; protein ubiquitination. Might act as an E3 ubiquitin-protein ligase, or as part of E3 complex, which accepts ubiquitin from specific E2 ubiquitin-conjugating enzymes and then transfers it to substrates. This chain is Probable E3 ubiquitin-protein ligase ARI10 (ARI10), found in Arabidopsis thaliana (Mouse-ear cress).